We begin with the raw amino-acid sequence, 411 residues long: Glycogen synthase kinase-3 homolog MsK-3 (411 aa).

The 285-residue stretch at 74–358 (YMAERVVGHG…ALEALVHPFY (285 aa)) folds into the Protein kinase domain. Residues 80–88 (VGHGSFGVV) and Lys103 each bind ATP. Catalysis depends on Asp199, which acts as the Proton acceptor. Tyr234 carries the phosphotyrosine modification.

This sequence belongs to the protein kinase superfamily. CMGC Ser/Thr protein kinase family. GSK-3 subfamily. As to expression, absent in leaves and petioles, very low levels are seen in the stems and roots while a moderate expression is seen in the nodes.

It catalyses the reaction L-seryl-[protein] + ATP = O-phospho-L-seryl-[protein] + ADP + H(+). It carries out the reaction L-threonyl-[protein] + ATP = O-phospho-L-threonyl-[protein] + ADP + H(+). The polypeptide is Glycogen synthase kinase-3 homolog MsK-3 (MSK-3) (Medicago sativa (Alfalfa)).